The primary structure comprises 1285 residues: Ataxin-2 (1285 aa).

Disordered stretches follow at residues 1–85, 111–178, and 197–224; these read MRSS…PGSR, ARAC…SPGA, and PVASSSAAAGGGRPGLGRGRNSSKGLPQ. Positions 29-38 are enriched in basic residues; the sequence is SLPRTARRGG. Residues 48 to 65 are compositionally biased toward pro residues; that stretch reads AGPPPRGPGAPPRGPRSP. Over residues 128–144 the composition is skewed to low complexity; that stretch reads SSSARPAPGCPRPACEP. Residues 205–214 are compositionally biased toward gly residues; it reads AGGGRPGLGR. A phosphoserine mark is found at S218 and S219. Positions 237–314 constitute a Sm domain; that stretch reads RMVHILTSVV…FVVVQFKDTD (78 aa). Phosphoserine is present on residues S362 and S435. 2 stretches are compositionally biased toward basic and acidic residues: residues 428–440 and 447–461; these read ALENDDRSEEEKY and CSDREGHGPNTRDNK. Disordered regions lie at residues 428-925 and 1111-1191; these read ALEN…HQQP and AALH…QSSF. A Phosphoserine modification is found at S477. Residues 498-510 are compositionally biased toward polar residues; that stretch reads ASHTSDFNPNAGS. Residue S523 is modified to Phosphoserine. Residues 526-552 are compositionally biased toward low complexity; that stretch reads PSHSSRPPSRYQSGPNSLPPRAATHTR. The span at 554 to 567 shows a compositional bias: pro residues; it reads PSRPPSRPSRPPSH. S593 bears the Phosphoserine mark. The span at 596–606 shows a compositional bias: basic residues; the sequence is AQRHPRNHRVS. Residue R609 is modified to Asymmetric dimethylarginine; alternate. R609 bears the Omega-N-methylarginine; alternate mark. A phosphoserine mark is found at S611 and S653. A compositionally biased stretch (polar residues) spans 662-672; sequence PRQSSIGNSPS. The segment covering 685–694 has biased composition (low complexity); the sequence is PAEAVSMPVP. Position 697 is a phosphoserine (S697). T710 carries the post-translational modification Phosphothreonine. Positions 737 to 746 are enriched in polar residues; that stretch reads ASETSPSFSK. S741 and S753 each carry phosphoserine. Residues 757–773 are compositionally biased toward basic and acidic residues; the sequence is SEHRKQIDDLKKFKNDF. Over residues 776–789 the composition is skewed to polar residues; it reads QPSSTSESMDQLLS. Residues 790–813 show a composition bias toward basic and acidic residues; sequence KNREGEKSRDLIKDKTEASAKDSF. Residues 814-838 are compositionally biased toward low complexity; the sequence is IDSSSSSSNCTSGSSKTNSPSISPS. Phosphoserine is present on residues S827, S828, S832, S836, S838, S859, and S860. Residues 851–862 show a composition bias toward polar residues; the sequence is VTSQGVQTSSPA. Residue K864 forms a Glycyl lysine isopeptide (Lys-Gly) (interchain with G-Cter in SUMO2) linkage. Residues 864 to 881 show a composition bias toward basic and acidic residues; it reads KQEKDDREEKKDTTEQVR. Composition is skewed to low complexity over residues 896–907 and 1128–1165; these read SFSQPKPSTTPT and GQQQSQHGGSHPAPSPVQHHQHQAAQALHLASPQQQSA.

Belongs to the ataxin-2 family. In terms of assembly, interacts with RBFOX1. Monomer. Can also form homodimers. Interacts with polyribosomes. Interacts with EGFR. Interacts with SH3GL3. Interacts with SH3GL2, SH3KBP1 and CBL. Interacts with ATXN2L. Expressed in the heart, lung, liver, kidney, skeletal muscle, spleen and intestine. Predominant expression was seen in the brain where a high level expression was found in the pyramidal cortical neurons, large brain stem neurons and cerebellar Purkinje cells. All three isoforms were found in all the tissues except skeletal muscle where only isoform 1 was found.

The protein localises to the cytoplasm. Functionally, involved in EGFR trafficking, acting as negative regulator of endocytic EGFR internalization at the plasma membrane. This chain is Ataxin-2 (Atxn2), found in Mus musculus (Mouse).